We begin with the raw amino-acid sequence, 446 residues long: NAD(P)H sulfur oxidoreductase (CoA-dependent) (446 aa).

Residue 17 to 18 participates in FAD binding; that stretch reads AA. Arginine 28 provides a ligand contact to CoA. Residues 39-40 and 46-48 contribute to the FAD site; these read EA and HAP. Residues 45-49, 66-67, and arginine 76 contribute to the CoA site; these read SHAPC and HY. Cysteine 49 serves as the catalytic Redox-active. FAD contacts are provided by valine 86, aspartate 284, and alanine 302. Residues asparagine 306 and lysine 362 each coordinate CoA. Tyrosine 426 serves as a coordination point for FAD. Residues tryptophan 434 and arginine 442 each contribute to the CoA site.

It belongs to the class-III pyridine nucleotide-disulfide oxidoreductase family. FAD serves as cofactor.

It catalyses the reaction hydrogen sulfide + NADP(+) = sulfur + NADPH. It carries out the reaction hydrogen sulfide + NAD(+) = sulfur + NADH. In terms of biological role, catalyzes the CoA-dependent reduction of elemental sulfur (S(0)) to produce hydrogen sulfide. In Pyrococcus abyssi (strain GE5 / Orsay), this protein is NAD(P)H sulfur oxidoreductase (CoA-dependent).